Here is a 128-residue protein sequence, read N- to C-terminus: Large ribosomal subunit protein bL12 (128 aa).

Belongs to the bacterial ribosomal protein bL12 family. As to quaternary structure, homodimer. Part of the ribosomal stalk of the 50S ribosomal subunit. Forms a multimeric L10(L12)X complex, where L10 forms an elongated spine to which 2 to 4 L12 dimers bind in a sequential fashion. Binds GTP-bound translation factors.

Forms part of the ribosomal stalk which helps the ribosome interact with GTP-bound translation factors. Is thus essential for accurate translation. This chain is Large ribosomal subunit protein bL12, found in Corynebacterium aurimucosum (strain ATCC 700975 / DSM 44827 / CIP 107346 / CN-1) (Corynebacterium nigricans).